A 254-amino-acid chain; its full sequence is UPF0246 protein FTN_1542 (254 aa).

The protein belongs to the UPF0246 family.

This is UPF0246 protein FTN_1542 from Francisella tularensis subsp. novicida (strain U112).